A 125-amino-acid polypeptide reads, in one-letter code: Temptin (125 aa).

The signal sequence occupies residues 1–22 (MEQKRTLRVFLAVSLLCALANA). 2 disulfide bridges follow: Cys-40-Cys-125 and Cys-79-Cys-99. The interval 78–125 (LCDMDSDGDGRSNGVELGDPECVWSQGETPARTTDLSHPGFDEATVSC) is disordered. A compositionally biased stretch (polar residues) spans 103–113 (QGETPARTTDL).

Binds to attractin and enticin. In terms of tissue distribution, produced by the albumen gland of the egg cordons.

It is found in the secreted. A component of the complex of water-borne protein pheromones that stimulates attraction and mating behavior. Modulates pheromone signaling by direct binding to attractin. The polypeptide is Temptin (Aplysia californica (California sea hare)).